Consider the following 216-residue polypeptide: Urease accessory protein UreG (216 aa).

Position 24–31 (24–31 (GPVGSGKT)) interacts with GTP.

The protein belongs to the SIMIBI class G3E GTPase family. UreG subfamily. In terms of assembly, homodimer. UreD, UreF and UreG form a complex that acts as a GTP-hydrolysis-dependent molecular chaperone, activating the urease apoprotein by helping to assemble the nickel containing metallocenter of UreC. The UreE protein probably delivers the nickel.

Its subcellular location is the cytoplasm. Functionally, facilitates the functional incorporation of the urease nickel metallocenter. This process requires GTP hydrolysis, probably effectuated by UreG. In Variovorax paradoxus (strain S110), this protein is Urease accessory protein UreG.